Reading from the N-terminus, the 276-residue chain is E3 ubiquitin-protein ligase CCNB1IP1 (276 aa).

The RING-type; atypical zinc-finger motif lies at 10–52 (CNYRKCRIKLSGYAWVTACSHIFCDQHGSGEFSRSPAICPACN). A coiled-coil region spans residues 146–182 (MKKVLEEYKKKFSDISEKLMERNRQYQKLQGLYDSLR).

In terms of assembly, interacts with CCNB1, UBE2L3 and NF2. Post-translationally, ubiquitinated; autoubiquitinated. In terms of processing, phosphorylated by CDK1 on serine or threonine residues (in vitro). In terms of tissue distribution, expressed predominantly in the testes and 17 day embryos (corresponding to prophase I in females). Weakly or not expressed in other tissues.

Its subcellular location is the nucleus. The protein resides in the chromosome. It carries out the reaction S-ubiquitinyl-[E2 ubiquitin-conjugating enzyme]-L-cysteine + [acceptor protein]-L-lysine = [E2 ubiquitin-conjugating enzyme]-L-cysteine + N(6)-ubiquitinyl-[acceptor protein]-L-lysine.. The protein operates within protein modification; protein ubiquitination. Functionally, ubiquitin E3 ligase that acts as a limiting factor for crossing-over during meiosis: required during zygonema to limit the colocalization of RNF212 with MutS-gamma-associated recombination sites and thereby establish early differentiation of crossover and non-crossover sites. Later, it is directed by MutL-gamma to stably accumulate at designated crossover sites. Probably promotes the dissociation of RNF212 and MutS-gamma to allow the progression of recombination and the implementation of the final steps of crossing over. Modulates cyclin-B levels and participates in the regulation of cell cycle progression through the G2 phase. Overexpression causes delayed entry into mitosis. The protein is E3 ubiquitin-protein ligase CCNB1IP1 (Ccnb1ip1) of Mus musculus (Mouse).